Reading from the N-terminus, the 58-residue chain is uncharacterized protein (58 aa).

This sequence to A.fulgidus AF2407.1.

This is an uncharacterized protein from Pyrococcus abyssi (strain GE5 / Orsay).